Consider the following 382-residue polypeptide: 2-epi-valiolone synthase (382 aa).

NAD(+) is bound by residues 92 to 95 (EKSK), 124 to 128 (GVVVD), 148 to 149 (TT), lysine 161, lysine 170, and 188 to 191 (HLRT). Positions 203, 266, and 283 each coordinate Zn(2+).

The protein belongs to the sugar phosphate cyclases superfamily. EVS family. Requires NAD(+) as cofactor. The cofactor is Co(2+). Zn(2+) is required as a cofactor.

It catalyses the reaction D-sedoheptulose 7-phosphate = 2-epi-valiolone + phosphate. Catalyzes the conversion of sedoheptulose 7-phosphate to 2-epi-valiolone, which may serve as an alternative precursor for aminocyclitol biosynthesis. The polypeptide is 2-epi-valiolone synthase (Actinosynnema mirum (strain ATCC 29888 / DSM 43827 / JCM 3225 / NBRC 14064 / NCIMB 13271 / NRRL B-12336 / IMRU 3971 / 101)).